The chain runs to 339 residues: UPF0324 membrane protein SpyM3_0740 (339 aa).

9 helical membrane-spanning segments follow: residues 7-24, 28-50, 57-79, 84-106, 118-140, 150-172, 256-275, 290-307, and 314-336; these read KLPGLLLCLLLALPAWYL, FPIIGAPVFAILLGMLLALFYHH, GISFTSKYILQTAVVLLGFGLNL, AVGMQSLPIIISTIATALLVAYG, ATLVGIGSSICGGSAIAATAPVI, AISVIFLFNMLAALLFPSLGQLL, FILFFLLASLITTLMTSLGV, FIVMAMAAIGLNTNLVKL, and AILLGSICWVAITLVSLAMQLSL.

It belongs to the UPF0324 family.

The protein resides in the cell membrane. This Streptococcus pyogenes serotype M3 (strain ATCC BAA-595 / MGAS315) protein is UPF0324 membrane protein SpyM3_0740.